The sequence spans 347 residues: Transcription factor JunB (347 aa).

Residues Lys-4, Lys-33, and Lys-36 each participate in a glycyl lysine isopeptide (Lys-Gly) (interchain with G-Cter in SUMO2) cross-link. The interval 50–77 (LKAPGARGPGPEGNGGGSYFSSQGSDTG) is disordered. The segment covering 56–67 (RGPGPEGNGGGS) has biased composition (gly residues). Residues 68-77 (YFSSQGSDTG) are compositionally biased toward polar residues. A Glycyl lysine isopeptide (Lys-Gly) (interchain with G-Cter in SUMO2) cross-link involves residue Lys-81. Residues Thr-102 and Thr-104 each carry the phosphothreonine modification. Position 117 is a phosphoserine (Ser-117). Lys-141 is covalently cross-linked (Glycyl lysine isopeptide (Lys-Gly) (interchain with G-Cter in SUMO2)). At Lys-240 the chain carries N6-acetyllysine; alternate. Lys-240 participates in a covalent cross-link: Glycyl lysine isopeptide (Lys-Gly) (interchain with G-Cter in SUMO1); alternate. A Glycyl lysine isopeptide (Lys-Gly) (interchain with G-Cter in SUMO2); alternate cross-link involves residue Lys-240. The segment covering 241-253 (EEPQTVPEARSRD) has biased composition (basic and acidic residues). Residues 241–260 (EEPQTVPEARSRDATPPVSP) form a disordered region. Phosphoserine is present on Ser-251. Residue Thr-255 is modified to Phosphothreonine. Ser-259 is subject to Phosphoserine. The segment at 268–295 (RIKVERKRLRNRLAATKCRKRKLERIAR) is basic motif. The region spanning 268–331 (RIKVERKRLR…AQLKQKVMTH (64 aa)) is the bZIP domain. The interval 296-324 (LEDKVKTLKAENAGLSSTAGLLREQVAQL) is leucine-zipper. Residue Lys-343 forms a Glycyl lysine isopeptide (Lys-Gly) (interchain with G-Cter in SUMO2) linkage.

The protein belongs to the bZIP family. Jun subfamily. In terms of assembly, binds DNA as a homodimer or as a heterodimer with another member of the Jun/Fos family. Component of an AP-1 transcription factor complex composed of JUN-FOS heterodimers. As part of the AP-1 transcription factor complex, forms heterodimers with FOSB, thereby binding to the AP-1 consensus sequence and stimulating transcription. Interacts with ITCH (via its WW domains). Ubiquitinated by ITCH, leading to its degradation.

It is found in the nucleus. Functionally, transcription factor involved in regulating gene activity following the primary growth factor response. Binds to the DNA sequence 5'-TGA[GC]TCA-3'. Heterodimerizes with proteins of the FOS family to form an AP-1 transcription complex, thereby enhancing its DNA binding activity to an AP-1 consensus sequence and its transcriptional activity. In Bos taurus (Bovine), this protein is Transcription factor JunB (JUNB).